Reading from the N-terminus, the 232-residue chain is U2 small nuclear ribonucleoprotein B'' (232 aa).

The 80-residue stretch at 10-89 folds into the RRM 1 domain; it reads QTVYLRNLNE…KRMRVQYAKT (80 aa). The interval 92 to 159 is disordered; that stretch reads DCLATEDGST…QEPPAPPNNI (68 aa). The segment covering 108-123 has biased composition (basic and acidic residues); that stretch reads KKQEEKAAEKKRRAEE. A compositionally biased stretch (polar residues) spans 127-151; sequence SGPNAAAQSNGTGYQASRLGKTSQE. The 75-residue stretch at 158 to 232 folds into the RRM 2 domain; it reads NILFIQNLPA…NPMAISYAKK (75 aa).

This sequence belongs to the RRM U1 A/B'' family. As to quaternary structure, component of the spliceosome where it is associated with snRNP U2.

The protein resides in the nucleus. It localises to the cajal body. Its subcellular location is the nucleoplasm. It is found in the cytoplasm. Functionally, involved in nuclear pre-mRNA splicing. This chain is U2 small nuclear ribonucleoprotein B'', found in Oryza sativa subsp. indica (Rice).